A 602-amino-acid polypeptide reads, in one-letter code: Adenylosuccinate synthetase (602 aa).

GTP contacts are provided by residues 74–80 (GDEGKGK) and 104–106 (GHT). Asp75 acts as the Proton acceptor in catalysis. Positions 75 and 104 each coordinate Mg(2+). Residues 75–78 (DEGK), 102–105 (NAGH), Thr189, Lys203, Gln315, Thr331, and Lys459 each bind IMP. Residue His105 is the Proton donor of the active site. Substrate is bound at residue 455-461 (AVTKKPR). Residues Arg461 and 589–591 (GNG) contribute to the GTP site.

It belongs to the adenylosuccinate synthetase family. As to quaternary structure, homodimer. It depends on Mg(2+) as a cofactor.

The protein resides in the cytoplasm. It carries out the reaction IMP + L-aspartate + GTP = N(6)-(1,2-dicarboxyethyl)-AMP + GDP + phosphate + 2 H(+). The protein operates within purine metabolism; AMP biosynthesis via de novo pathway; AMP from IMP: step 1/2. Functionally, plays an important role in the salvage pathway for purine nucleotide biosynthesis. Catalyzes the first committed step in the biosynthesis of AMP from IMP. This chain is Adenylosuccinate synthetase, found in Trypanosoma brucei gambiense (strain MHOM/CI/86/DAL972).